The sequence spans 433 residues: N-lysine methyltransferase SMYD2 (433 aa).

Residues 7–241 form the SET domain; it reads GGLERFCSPG…PGEEVFTSYI (235 aa). 17–19 serves as a coordination point for S-adenosyl-L-methionine; it reads KGR. Residues Cys-52, Cys-55, Cys-65, Cys-68, Cys-74, Cys-78, His-86, and Cys-90 each coordinate Zn(2+). The MYND-type zinc finger occupies 52–90; sequence CEYCFTRKEGLSKCGRCKQAFYCNVECQKEDWPMHKLEC. Residues His-137, 206–207, and 258–260 contribute to the S-adenosyl-L-methionine site; these read NH and YFF. Phosphoserine is present on Ser-283.

The protein belongs to the class V-like SAM-binding methyltransferase superfamily. In terms of assembly, interacts with RNA polymerase II and HELZ. Interacts with SIN3A and HDAC1. Interacts (via MYND-type zinc finger) with EPB41L3. Interacts (via SET domain) with p53/TP53. Interacts with RB1 and HSP90AA1.

The protein localises to the cytoplasm. It is found in the cytosol. The protein resides in the nucleus. The enzyme catalyses L-lysyl(4)-[histone H3] + 3 S-adenosyl-L-methionine = N(6),N(6),N(6)-trimethyl-L-lysyl(4)-[histone H3] + 3 S-adenosyl-L-homocysteine + 3 H(+). It catalyses the reaction L-lysyl-[protein] + S-adenosyl-L-methionine = N(6)-methyl-L-lysyl-[protein] + S-adenosyl-L-homocysteine + H(+). Protein-lysine N-methyltransferase that methylates both histones and non-histone proteins, including p53/TP53 and RB1. Specifically trimethylates histone H3 'Lys-4' (H3K4me3) in vivo. The activity requires interaction with HSP90alpha. Shows even higher methyltransferase activity on p53/TP53. Monomethylates 'Lys-370' of p53/TP53, leading to decreased DNA-binding activity and subsequent transcriptional regulation activity of p53/TP53. Monomethylates RB1 at 'Lys-860'. The protein is N-lysine methyltransferase SMYD2 (SMYD2) of Homo sapiens (Human).